The following is a 254-amino-acid chain: uncharacterized protein (254 aa).

This is an uncharacterized protein from Haemophilus influenzae (strain ATCC 51907 / DSM 11121 / KW20 / Rd).